We begin with the raw amino-acid sequence, 400 residues long: Bifunctional enzyme IspD/IspF (400 aa).

The interval 1–244 is 2-C-methyl-D-erythritol 4-phosphate cytidylyltransferase; the sequence is MSHRVLGTER…LLKERDKMDI (244 aa). The 2-C-methyl-D-erythritol 2,4-cyclodiphosphate synthase stretch occupies residues 245–400; sequence RTGNGYDVHR…ALATVTLVRT (156 aa). Positions 251 and 253 each coordinate a divalent metal cation. 4-CDP-2-C-methyl-D-erythritol 2-phosphate contacts are provided by residues 251 to 253 and 277 to 278; these read DVH and HS. Residue His-285 participates in a divalent metal cation binding. Residues 299 to 301, 375 to 378, Phe-382, and Arg-385 contribute to the 4-CDP-2-C-methyl-D-erythritol 2-phosphate site; these read DIG and TTSE.

It in the N-terminal section; belongs to the IspD/TarI cytidylyltransferase family. IspD subfamily. In the C-terminal section; belongs to the IspF family. The cofactor is a divalent metal cation.

The enzyme catalyses 2-C-methyl-D-erythritol 4-phosphate + CTP + H(+) = 4-CDP-2-C-methyl-D-erythritol + diphosphate. The catalysed reaction is 4-CDP-2-C-methyl-D-erythritol 2-phosphate = 2-C-methyl-D-erythritol 2,4-cyclic diphosphate + CMP. It functions in the pathway isoprenoid biosynthesis; isopentenyl diphosphate biosynthesis via DXP pathway; isopentenyl diphosphate from 1-deoxy-D-xylulose 5-phosphate: step 2/6. It participates in isoprenoid biosynthesis; isopentenyl diphosphate biosynthesis via DXP pathway; isopentenyl diphosphate from 1-deoxy-D-xylulose 5-phosphate: step 4/6. Functionally, bifunctional enzyme that catalyzes the formation of 4-diphosphocytidyl-2-C-methyl-D-erythritol from CTP and 2-C-methyl-D-erythritol 4-phosphate (MEP) (IspD), and catalyzes the conversion of 4-diphosphocytidyl-2-C-methyl-D-erythritol 2-phosphate (CDP-ME2P) to 2-C-methyl-D-erythritol 2,4-cyclodiphosphate (ME-CPP) with a corresponding release of cytidine 5-monophosphate (CMP) (IspF). The protein is Bifunctional enzyme IspD/IspF of Dinoroseobacter shibae (strain DSM 16493 / NCIMB 14021 / DFL 12).